The following is a 130-amino-acid chain: Small ribosomal subunit protein uS8 (130 aa).

It belongs to the universal ribosomal protein uS8 family. Part of the 30S ribosomal subunit. Contacts proteins S5 and S12.

Functionally, one of the primary rRNA binding proteins, it binds directly to 16S rRNA central domain where it helps coordinate assembly of the platform of the 30S subunit. The chain is Small ribosomal subunit protein uS8 from Vibrio cholerae serotype O1 (strain ATCC 39541 / Classical Ogawa 395 / O395).